A 1257-amino-acid chain; its full sequence is uncharacterized protein (1257 aa).

The tract at residues 1–26 is disordered; it reads MNFSNKPNKSRKKSNRKNKKSNKSNT. Over residues 8 to 22 the composition is skewed to basic residues; that stretch reads NKSRKKSNRKNKKSN.

Its subcellular location is the virion. This is an uncharacterized protein from Acanthamoeba polyphaga mimivirus (APMV).